A 505-amino-acid polypeptide reads, in one-letter code: ATP synthase subunit alpha (505 aa).

Residue 169 to 176 (GDRQTGKT) participates in ATP binding.

This sequence belongs to the ATPase alpha/beta chains family. F-type ATPases have 2 components, CF(1) - the catalytic core - and CF(0) - the membrane proton channel. CF(1) has five subunits: alpha(3), beta(3), gamma(1), delta(1), epsilon(1). CF(0) has three main subunits: a(1), b(2) and c(9-12). The alpha and beta chains form an alternating ring which encloses part of the gamma chain. CF(1) is attached to CF(0) by a central stalk formed by the gamma and epsilon chains, while a peripheral stalk is formed by the delta and b chains.

The protein localises to the cell membrane. The enzyme catalyses ATP + H2O + 4 H(+)(in) = ADP + phosphate + 5 H(+)(out). Produces ATP from ADP in the presence of a proton gradient across the membrane. The alpha chain is a regulatory subunit. This chain is ATP synthase subunit alpha, found in Alkaliphilus oremlandii (strain OhILAs) (Clostridium oremlandii (strain OhILAs)).